We begin with the raw amino-acid sequence, 478 residues long: MPVPSQPLPLHLDPLDPLLSTYHFVGIGGVGMSALAYILAKQGFRVSGSDIVANGRTRRLEALGVRFFQGHSSEGLVGDPQVVYSSAIRPTNPELAAALGKGLTVWHRADLLAALFNRRSGIGVAGTHGKTTTSSMIGYVLLSAGWDPTLIIGGEVDAWDGNARLGKGEYWVAEVDESDGSLVRLYPKIGVITNIELDHPDHYADLGQVIRAFQQYGQQSQTLVACLDCPNVAAHLRVDVGYSLTGHPQAQYQARQILYTASFTCAEIWEKGSLLGQLRLQVLGSHNLSNALAAVAVGRQLGLEFAVIASALAQFRGAHRRFEHKGEVGGVTFIDDYAHHPSEIRATLQAARLQQRRVVAVFQPHRHSRLAALFQDFARCFGEADVVVIVPTYGAGEPAPEGSDSLRLAVAVAEHHPHVRYVSSLPQLPEVLPSVLQPGDLAVFLGAGDLNQQIIATMRAYAAQVREQPGQAKNPNFS.

Residue 126-132 (GTHGKTT) coordinates ATP.

This sequence belongs to the MurCDEF family.

It is found in the cytoplasm. The enzyme catalyses UDP-N-acetyl-alpha-D-muramate + L-alanine + ATP = UDP-N-acetyl-alpha-D-muramoyl-L-alanine + ADP + phosphate + H(+). Its pathway is cell wall biogenesis; peptidoglycan biosynthesis. Its function is as follows. Cell wall formation. This is UDP-N-acetylmuramate--L-alanine ligase from Synechococcus sp. (strain JA-2-3B'a(2-13)) (Cyanobacteria bacterium Yellowstone B-Prime).